A 470-amino-acid polypeptide reads, in one-letter code: MDILCEENTSLSSTTNSLMQLHADTRLYSTDFNSGEGNTSNAFNWTVDSENRTNLSCEGCLSPPCFSLLHLQEKNWSALLTAVVIILTIAGNILVIMAVSLEKKLQNATNYFLMSLAIADMLLGFLVMPVSTLTILYGYRWPLPSKLCAVWIYLDVLFSTASIMHLCAISLDRYVAIQNPIHHSRFNSRTKAFLKIIAVWTISVGISMPIPVFGLQDDSKVFKEGSCLLADENFVLIGSFVAFFIPLTIMVITYFLTIKSLQKEATLCVSDPGTRTKLASFSFLPQSSLSSEKLFQRSIHREPGSYGRRTMQSISNEQKACKVLGIVFFLFVVMWCPFFITNIMAVICKESCNRDVIEALLNVFVWIGYLSSAVNPLVYTLFNKTYRSAFSRYIQCQYKENKKPLQLILVNTIPALAYKSSQLQMGPKKNSKKDDKTTDNDCTMVALGKEHPEDAPADSSNTVNEKVSCV.

The Extracellular segment spans residues 1–80 (MDILCEENTS…LQEKNWSALL (80 aa)). N38 is a glycosylation site (N-linked (GlcNAc...) asparagine). A helical membrane pass occupies residues 81–97 (TAVVIILTIAGNILVIM). The Cytoplasmic portion of the chain corresponds to 98 to 111 (AVSLEKKLQNATNY). A helical transmembrane segment spans residues 112 to 137 (FLMSLAIADMLLGFLVMPVSTLTILY). Topologically, residues 138–146 (GYRWPLPSK) are extracellular. Residues 147–171 (LCAVWIYLDVLFSTASIMHLCAISL) form a helical membrane-spanning segment. A disulfide bridge connects residues C148 and C227. D155 contacts serotonin. The short motif at 172 to 174 (DRY) is the DRY motif; important for ligand-induced conformation changes element. Over 172-191 (DRYVAIQNPIHHSRFNSRTK) the chain is Cytoplasmic. The helical transmembrane segment at 192-215 (AFLKIIAVWTISVGISMPIPVFGL) threads the bilayer. At 216–232 (QDDSKVFKEGSCLLADE) the chain is on the extracellular side. Residues 233–258 (NFVLIGSFVAFFIPLTIMVITYFLTI) traverse the membrane as a helical segment. The Cytoplasmic segment spans residues 259–321 (KSLQKEATLC…QSISNEQKAC (63 aa)). S280 is modified (phosphoserine). A helical transmembrane segment spans residues 322-347 (KVLGIVFFLFVVMWCPFFITNIMAVI). Residue N342 coordinates serotonin. An intrachain disulfide couples C348 to C352. The Extracellular portion of the chain corresponds to 348–355 (CKESCNRD). A helical membrane pass occupies residues 356-381 (VIEALLNVFVWIGYLSSAVNPLVYTL). The NPxxY motif; important for ligand-induced conformation changes and signaling motif lies at 375 to 379 (NPLVY). The Cytoplasmic segment spans residues 382-470 (FNKTYRSAFS…NTVNEKVSCV (89 aa)). A disordered region spans residues 424-470 (QMGPKKNSKKDDKTTDNDCTMVALGKEHPEDAPADSSNTVNEKVSCV). Over residues 458–470 (DSSNTVNEKVSCV) the composition is skewed to polar residues. Residues 468-470 (SCV) carry the PDZ-binding motif.

This sequence belongs to the G-protein coupled receptor 1 family. As to quaternary structure, interacts (via C-terminus) with MPDZ and PATJ. May interact (via C-terminus) with MPP3, PRDX6, DLG4, DLG1, CASK, APBA1 and MAGI2. Interacts with GRM2 and DRD2; this may affect signaling.

The protein localises to the cell membrane. The protein resides in the cell projection. It localises to the dendrite. Its subcellular location is the axon. It is found in the cytoplasmic vesicle. The protein localises to the membrane. The protein resides in the caveola. It localises to the presynapse. G-protein coupled receptor activity is regulated by lipids: oleamide increases HTR2A-mediated activity. Functionally, G-protein coupled receptor for 5-hydroxytryptamine (serotonin). Also functions as a receptor for various drugs and psychoactive substances, including mescaline, psilocybin, 1-(2,5-dimethoxy-4-iodophenyl)-2-aminopropane (DOI) and lysergic acid diethylamide (LSD). Ligand binding causes a conformation change that triggers signaling via guanine nucleotide-binding proteins (G proteins) and modulates the activity of downstream effectors. HTR2A is coupled to G(q)/G(11) G alpha proteins and activates phospholipase C-beta, releasing diacylglycerol (DAG) and inositol 1,4,5-trisphosphate (IP3) second messengers that modulate the activity of phosphatidylinositol 3-kinase and promote the release of Ca(2+) ions from intracellular stores, respectively. Beta-arrestin family members inhibit signaling via G proteins and mediate activation of alternative signaling pathways. Affects neural activity, perception, cognition and mood. Plays a role in the regulation of behavior, including responses to anxiogenic situations and psychoactive substances. Plays a role in intestinal smooth muscle contraction, and may play a role in arterial vasoconstriction. This Bos taurus (Bovine) protein is 5-hydroxytryptamine receptor 2A (HTR2A).